A 378-amino-acid polypeptide reads, in one-letter code: Protein RecA (378 aa).

Glycine 79–threonine 86 lines the ATP pocket.

Belongs to the RecA family.

The protein resides in the cytoplasm. Can catalyze the hydrolysis of ATP in the presence of single-stranded DNA, the ATP-dependent uptake of single-stranded DNA by duplex DNA, and the ATP-dependent hybridization of homologous single-stranded DNAs. It interacts with LexA causing its activation and leading to its autocatalytic cleavage. The sequence is that of Protein RecA from Streptococcus pyogenes serotype M12 (strain MGAS2096).